Consider the following 86-residue polypeptide: RNA-binding protein Hfq (86 aa).

Positions 9–68 constitute a Sm domain; sequence DPYLNTLRKEKVGVSIYLVNGIKLQGTIESFDQFVILLKNTVSQMVYKHAISTVVPVRPI.

The protein belongs to the Hfq family. In terms of assembly, homohexamer.

Functionally, RNA chaperone that binds small regulatory RNA (sRNAs) and mRNAs to facilitate mRNA translational regulation in response to envelope stress, environmental stress and changes in metabolite concentrations. Also binds with high specificity to tRNAs. In Pseudomonas savastanoi pv. phaseolicola (strain 1448A / Race 6) (Pseudomonas syringae pv. phaseolicola (strain 1448A / Race 6)), this protein is RNA-binding protein Hfq.